The primary structure comprises 285 residues: Eukaryotic translation initiation factor 3 subunit F-2 (285 aa).

Positions 11 to 145 (VYLKPLVFFQ…TRLYCAVEMG (135 aa)) constitute an MPN domain.

Belongs to the eIF-3 subunit F family. Component of the eukaryotic translation initiation factor 3 (eIF-3) complex. The eIF-3 complex interacts with pix.

Its subcellular location is the cytoplasm. Functionally, component of the eukaryotic translation initiation factor 3 (eIF-3) complex, which is involved in protein synthesis of a specialized repertoire of mRNAs and, together with other initiation factors, stimulates binding of mRNA and methionyl-tRNAi to the 40S ribosome. The eIF-3 complex specifically targets and initiates translation of a subset of mRNAs involved in cell proliferation. This chain is Eukaryotic translation initiation factor 3 subunit F-2, found in Drosophila melanogaster (Fruit fly).